The sequence spans 102 residues: Putative toxin YafQ (102 aa).

It belongs to the RelE toxin family. YafQ subfamily.

In terms of biological role, toxic component of a type II toxin-antitoxin (TA) system. Its cognate antitoxin is RelB. This chain is Putative toxin YafQ, found in Haemophilus influenzae (strain ATCC 51907 / DSM 11121 / KW20 / Rd).